Reading from the N-terminus, the 308-residue chain is Ribosomal RNA small subunit methyltransferase H (308 aa).

S-adenosyl-L-methionine is bound by residues 32–34, aspartate 52, phenylalanine 79, aspartate 100, and glutamine 107; that span reads AGH.

Belongs to the methyltransferase superfamily. RsmH family.

Its subcellular location is the cytoplasm. The enzyme catalyses cytidine(1402) in 16S rRNA + S-adenosyl-L-methionine = N(4)-methylcytidine(1402) in 16S rRNA + S-adenosyl-L-homocysteine + H(+). In terms of biological role, specifically methylates the N4 position of cytidine in position 1402 (C1402) of 16S rRNA. This Mycoplasma mycoides subsp. mycoides SC (strain CCUG 32753 / NCTC 10114 / PG1) protein is Ribosomal RNA small subunit methyltransferase H.